The following is a 1111-amino-acid chain: Protein STU1 (1111 aa).

HEAT repeat units follow at residues 95 to 133 (ALPLIVEKLGDQKEKFRQLASQALATLYKVAPVEVERSV) and 167 to 205 (YVPTMMELLEDADGMVRDVAKSTVIELFRNAPGPAKSDL). Disordered stretches follow at residues 225 to 245 (ELNPTSSAPASQPDPESVEPS) and 476 to 751 (RLLQ…VDEE). Residues 502–511 (SKSTMGTSKP) are compositionally biased toward polar residues. A compositionally biased stretch (basic and acidic residues) spans 704 to 714 (PREEQRFVKPV).

This sequence belongs to the CLASP family. In terms of assembly, interacts with microtubules.

It is found in the cytoplasm. The protein resides in the cytoskeleton. The protein localises to the nucleus. It localises to the spindle. Microtubule binding protein that promotes the stabilization of dynamic microtubules. Required for mitotic spindle formation. In Chaetomium globosum (strain ATCC 6205 / CBS 148.51 / DSM 1962 / NBRC 6347 / NRRL 1970) (Soil fungus), this protein is Protein STU1 (STU1).